The following is a 295-amino-acid chain: Indole-3-glycerol phosphate synthase (295 aa).

Belongs to the TrpC family.

It carries out the reaction 1-(2-carboxyphenylamino)-1-deoxy-D-ribulose 5-phosphate + H(+) = (1S,2R)-1-C-(indol-3-yl)glycerol 3-phosphate + CO2 + H2O. It participates in amino-acid biosynthesis; L-tryptophan biosynthesis; L-tryptophan from chorismate: step 4/5. The chain is Indole-3-glycerol phosphate synthase from Synechococcus sp. (strain ATCC 27144 / PCC 6301 / SAUG 1402/1) (Anacystis nidulans).